The sequence spans 593 residues: Eukaryotic peptide chain release factor subunit 1 (593 aa).

It belongs to the eukaryotic release factor 1 family. As to quaternary structure, heterodimer of two subunits, one of which binds GTP.

The protein localises to the cytoplasm. In terms of biological role, directs the termination of nascent peptide synthesis (translation) in response to the termination codons UAA, UAG and UGA. This Caenorhabditis elegans protein is Eukaryotic peptide chain release factor subunit 1.